Consider the following 591-residue polypeptide: Pentatricopeptide repeat-containing protein At2g35130 (591 aa).

PPR repeat units lie at residues 154-188 (DVIC…RYVP), 189-223 (TEDT…HVSP), 227-262 (GVTV…RCKP), 263-297 (TTET…QCKP), 298-332 (NICT…GLEP), 333-367 (DVYV…GCEP), 368-402 (DRAS…GIAP), 403-437 (TMKS…GVEP), 438-472 (DTFV…PCTA), 473-507 (DIST…NFRP), 508-542 (DVVT…GCAP), and 543-573 (DGGT…MHKG).

It belongs to the PPR family. P subfamily.

This Arabidopsis thaliana (Mouse-ear cress) protein is Pentatricopeptide repeat-containing protein At2g35130.